A 107-amino-acid polypeptide reads, in one-letter code: Nucleoid-associated protein PHZ_c0369 (107 aa).

Belongs to the YbaB/EbfC family. As to quaternary structure, homodimer.

It localises to the cytoplasm. Its subcellular location is the nucleoid. Its function is as follows. Binds to DNA and alters its conformation. May be involved in regulation of gene expression, nucleoid organization and DNA protection. This chain is Nucleoid-associated protein PHZ_c0369, found in Phenylobacterium zucineum (strain HLK1).